The following is a 409-amino-acid chain: Casein kinase I isoform delta-B (409 aa).

The Protein kinase domain occupies 9 to 277; that stretch reads YRLGRKIGSG…YLRQLFRNLF (269 aa). ATP-binding positions include 15 to 23 and Lys38; that span reads IGSGSFGDI. Asp128 serves as the catalytic Proton acceptor. A compositionally biased stretch (basic and acidic residues) spans 300 to 315; it reads TAEEADRERRERDERM. Positions 300–409 are disordered; that stretch reads TAEEADRERR…NSIPFDHHGK (110 aa). The autoinhibitory stretch occupies residues 317–341; it reads HSRNPAARGIPAASGRPRPTQDGAP. 2 stretches are compositionally biased toward polar residues: residues 346–358 and 380–402; these read TPTSHTANTSSPR and NVSSSDLTGRQDTSRMSTSQNSI.

Belongs to the protein kinase superfamily. Monomer. Interacts with per1 and per2. Component of the circadian core oscillator. Autophosphorylated on serine and threonine residues.

The protein resides in the cytoplasm. Its subcellular location is the nucleus. The enzyme catalyses L-seryl-[protein] + ATP = O-phospho-L-seryl-[protein] + ADP + H(+). It carries out the reaction L-threonyl-[protein] + ATP = O-phospho-L-threonyl-[protein] + ADP + H(+). Exhibits substrate-dependent heparin activation. In terms of biological role, casein kinases are operationally defined by their preferential utilization of acidic proteins such as caseins as substrates. Central component of the circadian clock. May act as a negative regulator of circadian rhythmicity by phosphorylating per1 and per2, which may lead to their degradation. Participates in wnt signaling. This chain is Casein kinase I isoform delta-B (csnk1db), found in Danio rerio (Zebrafish).